The chain runs to 243 residues: Geranylgeranylglyceryl phosphate synthase (243 aa).

2 residues coordinate Mg(2+): aspartate 22 and serine 51. Residues 170 to 176 (YLESGSG), 201 to 202 (GG), and 223 to 224 (GT) contribute to the sn-glycerol 1-phosphate site.

The protein belongs to the GGGP/HepGP synthase family. Group II subfamily. Requires Mg(2+) as cofactor.

The protein resides in the cytoplasm. It catalyses the reaction sn-glycerol 1-phosphate + (2E,6E,10E)-geranylgeranyl diphosphate = sn-3-O-(geranylgeranyl)glycerol 1-phosphate + diphosphate. It participates in membrane lipid metabolism; glycerophospholipid metabolism. Functionally, prenyltransferase that catalyzes the transfer of the geranylgeranyl moiety of geranylgeranyl diphosphate (GGPP) to the C3 hydroxyl of sn-glycerol-1-phosphate (G1P). This reaction is the first ether-bond-formation step in the biosynthesis of archaeal membrane lipids. The sequence is that of Geranylgeranylglyceryl phosphate synthase from Picrophilus torridus (strain ATCC 700027 / DSM 9790 / JCM 10055 / NBRC 100828 / KAW 2/3).